A 153-amino-acid polypeptide reads, in one-letter code: D-aminoacyl-tRNA deacylase (153 aa).

The short motif at 142–143 (GP) is the Gly-cisPro motif, important for rejection of L-amino acids element.

Belongs to the DTD family. Homodimer.

Its subcellular location is the cytoplasm. The catalysed reaction is glycyl-tRNA(Ala) + H2O = tRNA(Ala) + glycine + H(+). It catalyses the reaction a D-aminoacyl-tRNA + H2O = a tRNA + a D-alpha-amino acid + H(+). Its function is as follows. An aminoacyl-tRNA editing enzyme that deacylates mischarged D-aminoacyl-tRNAs. Also deacylates mischarged glycyl-tRNA(Ala), protecting cells against glycine mischarging by AlaRS. Acts via tRNA-based rather than protein-based catalysis; rejects L-amino acids rather than detecting D-amino acids in the active site. By recycling D-aminoacyl-tRNA to D-amino acids and free tRNA molecules, this enzyme counteracts the toxicity associated with the formation of D-aminoacyl-tRNA entities in vivo and helps enforce protein L-homochirality. In Cupriavidus necator (strain ATCC 17699 / DSM 428 / KCTC 22496 / NCIMB 10442 / H16 / Stanier 337) (Ralstonia eutropha), this protein is D-aminoacyl-tRNA deacylase.